Consider the following 624-residue polypeptide: Double-stranded RNA-binding protein Staufen homolog 2 (624 aa).

DRBM domains lie at 55–122 (STSI…NGLA), 142–228 (QRAN…SEIS), 254–321 (MKSF…PEYG), 354–422 (RRRE…IADQ), and 540–604 (LTCL…EKAD). The interval 197 to 223 (LRNEPIPERSSLNGEANRGPEEDKDAN) is disordered. Positions 214–223 (RGPEEDKDAN) are enriched in basic and acidic residues. 2 disordered regions span residues 401–428 (EKTGKRGENPDWDEQNSGIADQTSTPKG) and 592–624 (PFEQAKLRGEKADNKQANSGTIAQDCKDSKAVV). Over residues 415–426 (QNSGIADQTSTP) the composition is skewed to polar residues. Residues 596 to 605 (AKLRGEKADN) show a composition bias toward basic and acidic residues.

Functionally, RNA-binding protein required for the microtubule-dependent transport of RNAs within polarized cell types. The chain is Double-stranded RNA-binding protein Staufen homolog 2 (stau2) from Xenopus tropicalis (Western clawed frog).